Here is a 189-residue protein sequence, read N- to C-terminus: ATP synthase subunit b (189 aa).

Residues 38–58 form a helical membrane-spanning segment; it reads PMFLATLIAFILVVLILWFLL.

It belongs to the ATPase B chain family. In terms of assembly, F-type ATPases have 2 components, F(1) - the catalytic core - and F(0) - the membrane proton channel. F(1) has five subunits: alpha(3), beta(3), gamma(1), delta(1), epsilon(1). F(0) has three main subunits: a(1), b(2) and c(10-14). The alpha and beta chains form an alternating ring which encloses part of the gamma chain. F(1) is attached to F(0) by a central stalk formed by the gamma and epsilon chains, while a peripheral stalk is formed by the delta and b chains.

Its subcellular location is the cell membrane. Functionally, f(1)F(0) ATP synthase produces ATP from ADP in the presence of a proton or sodium gradient. F-type ATPases consist of two structural domains, F(1) containing the extramembraneous catalytic core and F(0) containing the membrane proton channel, linked together by a central stalk and a peripheral stalk. During catalysis, ATP synthesis in the catalytic domain of F(1) is coupled via a rotary mechanism of the central stalk subunits to proton translocation. Its function is as follows. Component of the F(0) channel, it forms part of the peripheral stalk, linking F(1) to F(0). This is ATP synthase subunit b from Mycoplasmopsis agalactiae (strain NCTC 10123 / CIP 59.7 / PG2) (Mycoplasma agalactiae).